The chain runs to 81 residues: Small ribosomal subunit protein bS16 (81 aa).

The protein belongs to the bacterial ribosomal protein bS16 family.

This chain is Small ribosomal subunit protein bS16, found in Desulfotalea psychrophila (strain LSv54 / DSM 12343).